The following is a 161-amino-acid chain: Cyclic pyranopterin monophosphate synthase (161 aa).

Substrate is bound by residues 75–77 (LCH) and 113–114 (ME). The active site involves Asp-128.

It belongs to the MoaC family. Homohexamer; trimer of dimers.

It carries out the reaction (8S)-3',8-cyclo-7,8-dihydroguanosine 5'-triphosphate = cyclic pyranopterin phosphate + diphosphate. It participates in cofactor biosynthesis; molybdopterin biosynthesis. Functionally, catalyzes the conversion of (8S)-3',8-cyclo-7,8-dihydroguanosine 5'-triphosphate to cyclic pyranopterin monophosphate (cPMP). The chain is Cyclic pyranopterin monophosphate synthase from Shigella sonnei (strain Ss046).